Here is a 319-residue protein sequence, read N- to C-terminus: tRNA uridine(34) hydroxylase (319 aa).

Positions 125–219 (LDENTVVIDA…YGKDPEVQGD (95 aa)) constitute a Rhodanese domain. Residue Cys179 is the Cysteine persulfide intermediate of the active site.

The protein belongs to the TrhO family.

It catalyses the reaction uridine(34) in tRNA + AH2 + O2 = 5-hydroxyuridine(34) in tRNA + A + H2O. Functionally, catalyzes oxygen-dependent 5-hydroxyuridine (ho5U) modification at position 34 in tRNAs. This chain is tRNA uridine(34) hydroxylase, found in Lactococcus lactis subsp. cremoris (strain MG1363).